The sequence spans 187 residues: Rusticyanin (187 aa).

The signal sequence occupies residues 1-32 (MYTQNTMKKNWYVTVGAAAALAATVGMGTAMA). Residues 85 to 187 (SFEVHDKKNP…TGMFGKIIVK (103 aa)) form the Plastocyanin-like domain. Cu cation is bound by residues His-117, Cys-170, His-175, and Met-180.

Monomer. Cu cation serves as cofactor.

The protein localises to the periplasm. Functionally, electron carrier from cytochrome c552 to the A-type oxidase. This Acidithiobacillus ferridurans protein is Rusticyanin (rus).